We begin with the raw amino-acid sequence, 108 residues long: uncharacterized protein (108 aa).

2 helical membrane-spanning segments follow: residues 51–71 (VFAA…FCFL) and 86–106 (PLST…KSLL).

The protein resides in the membrane. This is an uncharacterized protein from Saccharomyces cerevisiae (strain ATCC 204508 / S288c) (Baker's yeast).